The following is a 328-amino-acid chain: Deoxynucleotidyltransferase terminal-interacting protein 1 (328 aa).

Disordered stretches follow at residues 1–30 (MGAT…GAAG) and 142–176 (ELPG…HVLS). Positions 12–22 (GPGGAERGGLE) are enriched in gly residues. The important for dimerization stretch occupies residues 56 to 147 (MTTSFTDPAI…RLAHELPGIK (92 aa)). Residues 142–158 (ELPGIKRGRQAEEESHR) show a composition bias toward basic and acidic residues. Residues 158-172 (RGSPIPKKRKGRPPG) constitute a DNA-binding region (a.T hook). A Phosphoserine modification is found at Ser-160. The Nuclear localization signal motif lies at 163 to 169 (PKKRKGR). The interval 196–315 (REGPKWDPAR…MRKYMETLRT (120 aa)) is important for DNA and nucleosome binding. Residues 215–236 (GSRANKALGMGGTRGRIYIKHP) constitute a DNA-binding region (H-T-H motif).

As to quaternary structure, monomer and homodimer. A minor proportion may form homotrimers. Interacts with ZNF541. Interacts with the terminal deoxynucleotidyltransferase DNTT. Interacts with TRERF1. Identified in a histone deacetylase complex that contains DNTTIP1, HDAC1 and MIDEAS; this complex assembles into a tetramer that contains four copies of each protein chain. Component of a histone deacetylase complex containing DNTTIP1, ZNF541, HDAC1 and HDAC2. Identified in a complex with KCTD19, HDAC1, HDAC2 and ZNF541.

The protein localises to the nucleus. Its function is as follows. Increases DNTT terminal deoxynucleotidyltransferase activity (in vitro). Also acts as a transcriptional regulator, binding to the consensus sequence 5'-GNTGCATG-3' following an AT-tract. Associates with RAB20 promoter and positively regulates its transcription. Binds DNA and nucleosomes; may recruit HDAC1 complexes to nucleosomes or naked DNA. This is Deoxynucleotidyltransferase terminal-interacting protein 1 (Dnttip1) from Mus musculus (Mouse).